A 213-amino-acid polypeptide reads, in one-letter code: Probable RNA 2'-phosphotransferase (213 aa).

Belongs to the KptA/TPT1 family.

Functionally, removes the 2'-phosphate from RNA via an intermediate in which the phosphate is ADP-ribosylated by NAD followed by a presumed transesterification to release the RNA and generate ADP-ribose 1''-2''-cyclic phosphate (APPR&gt;P). May function as an ADP-ribosylase. This Pyrobaculum aerophilum (strain ATCC 51768 / DSM 7523 / JCM 9630 / CIP 104966 / NBRC 100827 / IM2) protein is Probable RNA 2'-phosphotransferase.